The following is a 299-amino-acid chain: Hydroxymethylglutaryl-CoA lyase YngG (299 aa).

The Pyruvate carboxyltransferase domain maps to 7–274; it reads VTIKEVGPRD…KTNVKLEKLL (268 aa). Position 15 (R15) interacts with substrate. The a divalent metal cation site is built by D16, H207, and H209. C240 is an active-site residue. N249 is an a divalent metal cation binding site.

This sequence belongs to the HMG-CoA lyase family. As to quaternary structure, homodimer and homotetramer.

The enzyme catalyses (3S)-3-hydroxy-3-methylglutaryl-CoA = acetoacetate + acetyl-CoA. It participates in metabolic intermediate metabolism; (S)-3-hydroxy-3-methylglutaryl-CoA degradation; acetoacetate from (S)-3-hydroxy-3-methylglutaryl-CoA: step 1/1. Involved in the catabolism of branched amino acids such as leucine. The chain is Hydroxymethylglutaryl-CoA lyase YngG (yngG) from Bacillus subtilis (strain 168).